The primary structure comprises 179 residues: Cytochrome b6-f complex iron-sulfur subunit 1 (179 aa).

The chain crosses the membrane as a helical span at residues 21-43; that stretch reads LLTFGTVTGVALGALYPVVNYFI. Positions 61-162 constitute a Rieske domain; sequence GNDVSVSKFL…AKTENDKIVL (102 aa). [2Fe-2S] cluster contacts are provided by Cys108, His110, Cys126, and His129. Cys113 and Cys128 form a disulfide bridge.

Belongs to the Rieske iron-sulfur protein family. As to quaternary structure, the 4 large subunits of the cytochrome b6-f complex are cytochrome b6, subunit IV (17 kDa polypeptide, PetD), cytochrome f and the Rieske protein, while the 4 small subunits are PetG, PetL, PetM and PetN. The complex functions as a dimer. The cofactor is [2Fe-2S] cluster.

The protein localises to the cellular thylakoid membrane. It catalyses the reaction 2 oxidized [plastocyanin] + a plastoquinol + 2 H(+)(in) = 2 reduced [plastocyanin] + a plastoquinone + 4 H(+)(out). Component of the cytochrome b6-f complex, which mediates electron transfer between photosystem II (PSII) and photosystem I (PSI), cyclic electron flow around PSI, and state transitions. In Nostoc sp. (strain PCC 7120 / SAG 25.82 / UTEX 2576), this protein is Cytochrome b6-f complex iron-sulfur subunit 1.